The sequence spans 532 residues: UDP-glucuronosyltransferase 1A4 (532 aa).

The signal sequence occupies residues 1 to 27; the sequence is MVLGVWITLWRLVRLLLLLCVLPWAEG. N-linked (GlcNAc...) asparagine glycans are attached at residues N141 and N295. Residues 490-506 form a helical membrane-spanning segment; it reads VIGFLLAIVLTVAFVTF.

It belongs to the UDP-glycosyltransferase family. As to quaternary structure, homodimers. Homooligomer. Interacts with UGT1A1, UGT1A3, UGT1A6, UGT1A7, UGT1A8, UGT1A9 and UGT1A10 to form heterodimers.

It is found in the endoplasmic reticulum membrane. It carries out the reaction glucuronate acceptor + UDP-alpha-D-glucuronate = acceptor beta-D-glucuronoside + UDP + H(+). The enzyme catalyses calcidiol + UDP-alpha-D-glucuronate = calcidiol 25-O-(beta-D-glucuronide) + UDP + H(+). It catalyses the reaction calcidiol + UDP-alpha-D-glucuronate = calcidiol 3-O-(beta-D-glucuronide) + UDP + H(+). The catalysed reaction is calcitriol + UDP-alpha-D-glucuronate = calcitriol 25-O-(beta-D-glucuronide) + UDP + H(+). It carries out the reaction (5Z,8Z,11Z,14Z)-eicosatetraenoate + UDP-alpha-D-glucuronate = O-[(5Z),(8Z),(11Z),(14Z)-eicosatetraenoyl]-beta-D-glucuronate + UDP. The enzyme catalyses 15-hydroxy-(5Z,8Z,11Z,13E)-eicosatetraenoate + UDP-alpha-D-glucuronate = 15-O-(beta-D-glucuronosyl)-(5Z,8Z,11Z,14Z)-eicosatetraenoate + UDP + H(+). It catalyses the reaction 20-hydroxy-(5Z,8Z,11Z,14Z)-eicosatetraenoate + UDP-alpha-D-glucuronate = 20-O-(beta-D-glucuronosyl)-(5Z,8Z,11Z,14Z)-eicosatetraenoate + UDP + H(+). UDP-glucuronosyltransferase (UGT) that catalyzes phase II biotransformation reactions in which lipophilic substrates are conjugated with glucuronic acid to increase the metabolite's water solubility, thereby facilitating excretion into either the urine or bile. Essential for the elimination and detoxification of drugs, xenobiotics and endogenous compounds. Involved in the glucuronidation of calcidiol, which is the major circulating form of vitamin D3 essential for the regulation of calcium and phosphate homeostasis. Also glucuronidates the biologically active form of vitamin D3, calcitriol, probably leading to its biliary transport and intestinal reabsorption. Involved in the glucuronidation of arachidonic acid (AA) and AA-derived eicosanoids including 15-HETE, 20-HETE and PGB1. In Oryctolagus cuniculus (Rabbit), this protein is UDP-glucuronosyltransferase 1A4 (Ugt1a4).